The chain runs to 313 residues: MVQEIAQEIIRSARKKGTQDIYFVPKLDAYELHMRVGDERCKIGSYDFEKFAAVISHFKFVAGMNVGEKRRSQLGSCDYAYDHKIASLRLSTVGDYRGHESLVIRLLHDEEQDLHFWFQDIEELGKQYRQRGLYLFAGPVGSGKTTLMHELSKSLFKGQQVMSIEDPVEIKQDDMLQLQLNEAIGLTYENLIKLSLRHRPDLLIIGEIRDSETARAVVRASLTGATVFSTIHAKSIRGVYERLLELGVSEEELAVVLQGVCYQRLIGGGGIVDFASRDYQEHQAAKWNEQIDQLLKDGHITSLQAETEKISYS.

Residue 138-145 (GPVGSGKT) coordinates ATP.

The protein belongs to the GSP E family.

It is found in the cell membrane. In terms of biological role, required for uptake of DNA by competent cells. May be involved in assembly of a complex forming a transformation pilus at the surface of competent cells. In Streptococcus pneumoniae (strain ATCC BAA-255 / R6), this protein is Competence protein ComGA.